The sequence spans 342 residues: DDB1- and CUL4-associated factor 7 (342 aa).

WD repeat units follow at residues 6-52, 60-100, 108-150, 165-206, 213-252, 257-296, and 303-342; these read KRKE…LVGL, ICRN…VWRV, ECLL…IWGL, HVKT…MFDL, TIIY…ILDV, TPVA…IWDI, and IEDP…ILRV.

This sequence belongs to the WD repeat DCAF7 family. Interacts with DYRK1A, DYRK1B and DIAPH1. Interacts with DDB1. Interacts with ZNF703. Interacts with human adenovirus 5 E1A protein.

The protein resides in the cytoplasm. It is found in the nucleus. It functions in the pathway protein modification; protein ubiquitination. In terms of biological role, involved in craniofacial development. Acts upstream of the EDN1 pathway and is required for formation of the upper jaw equivalent, the palatoquadrate. The activity required for EDN1 pathway function differs between the first and second arches. Associates with DIAPH1 and controls GLI1 transcriptional activity. Could be involved in normal and disease skin development. May function as a substrate receptor for CUL4-DDB1 E3 ubiquitin-protein ligase complex. The chain is DDB1- and CUL4-associated factor 7 (DCAF7) from Homo sapiens (Human).